Here is a 170-residue protein sequence, read N- to C-terminus: Photosystem II extrinsic protein V (170 aa).

The N-terminal stretch at 1-33 (MASFFSTLRRSLNRLLIALPVLLGLMISTPAQA) is a signal peptide. Heme c is bound by residues Cys-70, Cys-73, His-74, and His-125.

It belongs to the cytochrome c family. PsbV subfamily. PSII is composed of 1 copy each of membrane proteins PsbA, PsbB, PsbC, PsbD, PsbE, PsbF, PsbH, PsbI, PsbJ, PsbK, PsbL, PsbM, PsbT, PsbX, PsbY, PsbZ, Psb30/Ycf12, peripheral proteins PsbO, CyanoQ (PsbQ), PsbU, PsbV and a large number of cofactors. It forms dimeric complexes. The cofactor is heme c.

Its subcellular location is the cellular thylakoid membrane. In terms of biological role, one of the extrinsic, lumenal subunits of photosystem II (PSII). PSII is a light-driven water plastoquinone oxidoreductase, using light energy to abstract electrons from H(2)O, generating a proton gradient subsequently used for ATP formation. The extrinsic proteins stabilize the structure of photosystem II oxygen-evolving complex (OEC), the ion environment of oxygen evolution and protect the OEC against heat-induced inactivation. Low-potential cytochrome c that plays a role in the OEC of PSII. The chain is Photosystem II extrinsic protein V from Synechococcus sp. (strain CC9311).